Reading from the N-terminus, the 210-residue chain is Holliday junction branch migration complex subunit RuvA (210 aa).

Residues 1-70 (MISYLKGNPI…DEQPILYGFA (70 aa)) form a domain I region. The segment at 71–149 (TAAERELFRQ…QWRKLVGITL (79 aa)) is domain II. Residues 150 to 160 (PSTSAIPSLEV) form a flexible linker region. Positions 160 to 210 (VLEDVEMTLLALGYTNEEINKAISTLSQDNQMLKNTNSEEWIREAIAWLSQ) are domain III.

It belongs to the RuvA family. In terms of assembly, homotetramer. Forms an RuvA(8)-RuvB(12)-Holliday junction (HJ) complex. HJ DNA is sandwiched between 2 RuvA tetramers; dsDNA enters through RuvA and exits via RuvB. An RuvB hexamer assembles on each DNA strand where it exits the tetramer. Each RuvB hexamer is contacted by two RuvA subunits (via domain III) on 2 adjacent RuvB subunits; this complex drives branch migration. In the full resolvosome a probable DNA-RuvA(4)-RuvB(12)-RuvC(2) complex forms which resolves the HJ.

Its subcellular location is the cytoplasm. In terms of biological role, the RuvA-RuvB-RuvC complex processes Holliday junction (HJ) DNA during genetic recombination and DNA repair, while the RuvA-RuvB complex plays an important role in the rescue of blocked DNA replication forks via replication fork reversal (RFR). RuvA specifically binds to HJ cruciform DNA, conferring on it an open structure. The RuvB hexamer acts as an ATP-dependent pump, pulling dsDNA into and through the RuvAB complex. HJ branch migration allows RuvC to scan DNA until it finds its consensus sequence, where it cleaves and resolves the cruciform DNA. The polypeptide is Holliday junction branch migration complex subunit RuvA (Rippkaea orientalis (strain PCC 8801 / RF-1) (Cyanothece sp. (strain PCC 8801))).